The primary structure comprises 43 residues: Defensin (43 aa).

Cystine bridges form between Cys3/Cys34, Cys20/Cys39, and Cys24/Cys41.

It belongs to the invertebrate defensin family. Type 1 subfamily.

Its subcellular location is the secreted. In terms of biological role, antibacterial peptide. Affects Gram-positive bacteria M.luteus, B.megaterium, A.viridans, S.aureus and S.saprophyticus. Moderate activity against P.acidilactici and B.subtilis QB935. Also affects Gram-negative bacterium, D22 form of E.coli. This is Defensin from Pyrrhocoris apterus (Sap sucking bug).